The primary structure comprises 420 residues: CinA-like protein (420 aa).

The protein belongs to the CinA family.

This Chlorobium phaeobacteroides (strain BS1) protein is CinA-like protein.